Here is a 443-residue protein sequence, read N- to C-terminus: MSEMTPREIVSELDKHIIGQDKAKRAVAIALRNRWRRMQLDETLRYEVTPKNILMIGPTGVGKTEIARRLAKLANAPFIKVEATKFTEVGYVGKEVDSIIRDLTDAAVKMVRLQSIEQNRYRAEELAEERILDVLIPPAKNNWGQTETQVEPSAARQAFRKKLREGQLDDKEIEIDVATTPVGVEIMAPPGMEEMTNQLQSMFQNLAGQKHKSRKLKIKDAFKLLIEEEASKLVNPEELKQQAIDSVEQHGIVFIDEIDKICKRGQTSGPDVSREGVQRDLLPLVEGCTVSTKHGMVKTDHILFIASGAFQVASPSDLIPELQGRLPIRVELQALTTKDFERILTEPSASLTEQYKALMETEGMIISFTDDGISKIAESAWQVNESTENIGARRLHTVLERLIEDISFEASERRGQSVDIDADYVKKHLDELVADEDLSRFIL.

ATP contacts are provided by residues I18, 60 to 65 (GVGKTE), D256, E321, and R393.

This sequence belongs to the ClpX chaperone family. HslU subfamily. In terms of assembly, a double ring-shaped homohexamer of HslV is capped on each side by a ring-shaped HslU homohexamer. The assembly of the HslU/HslV complex is dependent on binding of ATP.

It is found in the cytoplasm. ATPase subunit of a proteasome-like degradation complex; this subunit has chaperone activity. The binding of ATP and its subsequent hydrolysis by HslU are essential for unfolding of protein substrates subsequently hydrolyzed by HslV. HslU recognizes the N-terminal part of its protein substrates and unfolds these before they are guided to HslV for hydrolysis. This chain is ATP-dependent protease ATPase subunit HslU, found in Photorhabdus laumondii subsp. laumondii (strain DSM 15139 / CIP 105565 / TT01) (Photorhabdus luminescens subsp. laumondii).